The primary structure comprises 4960 residues: Malformin synthetase mlfA (4960 aa).

The segment at 194-564 (ERHATNRPHS…CGRADTQVKL (371 aa)) is adenylation 1. The region spanning 705–778 (SRLEQEVQLA…EAASLAEVQE (74 aa)) is the Carrier 1 domain. Ser-739 is subject to O-(pantetheine 4'-phosphoryl)serine. A condensation 1 region spans residues 816–1247 (EDVFPCTTMQ…ALNTLSLLQA (432 aa)). The segment at 1275-1650 (DRWVTRQPEG…GRKDTQVKLR (376 aa)) is adenylation 2. The region spanning 1777 to 1854 (TPASELERTL…HLAAEVGEPA (78 aa)) is the Carrier 2 domain. 2 disordered regions span residues 1855–1883 (GQSASSASSTTEEGFTFSTPDDSSTNDGV) and 1917–1943 (GGSSSNKTPSVSSSSSSSSSSKRKKNA). 2 stretches are compositionally biased toward low complexity: residues 1857–1881 (SASSASSTTEEGFTFSTPDDSSTND) and 1919–1936 (SSSNKTPSVSSSSSSSSS). Positions 1989 to 2404 (EDIYPATALQ…AVSCSDKETL (416 aa)) are condensation 2. Residues 2427–2819 (RRTPHAPAVC…IGRRDGQLKL (393 aa)) are adenylation 3. A Carrier 3 domain is found at 2955 to 3031 (RPVTSQEREM…QLICHINTIR (77 aa)). Residue Ser-2992 is modified to O-(pantetheine 4'-phosphoryl)serine. Condensation regions lie at residues 3049–3464 (VALA…FTFP) and 3520–3889 (SGYV…EQLV). The tract at residues 3914–4304 (HNSRQAVCAW…VGRKDNQIKF (391 aa)) is adenylation 4. Residues 4438 to 4514 (MPSTAAERKM…DLSDQAKSLI (77 aa)) form the Carrier 4 domain. Ser-4475 bears the O-(pantetheine 4'-phosphoryl)serine mark. A condensation 5 region spans residues 4551–4878 (DVLPTTSFQH…LQTIVQHQNN (328 aa)).

Belongs to the NRP synthetase family.

It functions in the pathway secondary metabolite biosynthesis. In terms of biological role, nonribosomal peptide synthetase; part of the gene cluster that mediates the biosynthesis of malformins, cyclic pentapeptides with a disulfide bond between 2 consecutive cysteins, that show potential anti-tumor as well as antimalarial and antitrypanosomal properties. The nonribosomal peptide synthetase mlfA is responsible of the formation of the cyclic pentapeptide. The malformin biosynthesis clusters in malformin-producing fungi also contain enzymes involved in the formation of the disulfide bond between the two consecutive cysteins within malformins, in addition to additional tailoring enzymes such as methyltransferases or oxidoreductases. They are also composed of up to 4 major facilitator superfamily transporters, and transcription factors probably involved in the regulation of the expression of those clusters. This Aspergillus neoniger (strain CBS 115656) protein is Malformin synthetase mlfA.